Consider the following 254-residue polypeptide: Tryptophan synthase alpha chain (254 aa).

Residues Glu-48 and Asp-59 each act as proton acceptor in the active site.

The protein belongs to the TrpA family. In terms of assembly, tetramer of two alpha and two beta chains.

The enzyme catalyses (1S,2R)-1-C-(indol-3-yl)glycerol 3-phosphate + L-serine = D-glyceraldehyde 3-phosphate + L-tryptophan + H2O. It participates in amino-acid biosynthesis; L-tryptophan biosynthesis; L-tryptophan from chorismate: step 5/5. The alpha subunit is responsible for the aldol cleavage of indoleglycerol phosphate to indole and glyceraldehyde 3-phosphate. The sequence is that of Tryptophan synthase alpha chain from Desulfotalea psychrophila (strain LSv54 / DSM 12343).